Consider the following 701-residue polypeptide: Elongation factor G (701 aa).

One can recognise a tr-type G domain in the interval 8-290 (SLYRNIGISA…AVVELLPAPT (283 aa)). Residues 17–24 (AHIDAGKT), 88–92 (DTPGH), and 142–145 (NKMD) each bind GTP.

The protein belongs to the TRAFAC class translation factor GTPase superfamily. Classic translation factor GTPase family. EF-G/EF-2 subfamily.

Its subcellular location is the cytoplasm. In terms of biological role, catalyzes the GTP-dependent ribosomal translocation step during translation elongation. During this step, the ribosome changes from the pre-translocational (PRE) to the post-translocational (POST) state as the newly formed A-site-bound peptidyl-tRNA and P-site-bound deacylated tRNA move to the P and E sites, respectively. Catalyzes the coordinated movement of the two tRNA molecules, the mRNA and conformational changes in the ribosome. In Neisseria gonorrhoeae (strain ATCC 700825 / FA 1090), this protein is Elongation factor G.